The chain runs to 799 residues: Elongation factor G, mitochondrial (799 aa).

Residues 1–34 (MRCPSLTRLPYRAVSGLPRSVVRLQSQNFLTRRC) constitute a mitochondrion transit peptide. The tr-type G domain maps to 97-384 (SRVRNIGIAA…GVVDYLPNPA (288 aa)). Residues 106-113 (AHIDSGKT), 182-186 (DTPGH), and 236-239 (NKMD) contribute to the GTP site.

The protein belongs to the TRAFAC class translation factor GTPase superfamily. Classic translation factor GTPase family. EF-G/EF-2 subfamily.

It is found in the mitochondrion. Its pathway is protein biosynthesis; polypeptide chain elongation. In terms of biological role, mitochondrial GTPase that catalyzes the GTP-dependent ribosomal translocation step during translation elongation. During this step, the ribosome changes from the pre-translocational (PRE) to the post-translocational (POST) state as the newly formed A-site-bound peptidyl-tRNA and P-site-bound deacylated tRNA move to the P and E sites, respectively. Catalyzes the coordinated movement of the two tRNA molecules, the mRNA and conformational changes in the ribosome. This chain is Elongation factor G, mitochondrial (mef1), found in Aspergillus flavus (strain ATCC 200026 / FGSC A1120 / IAM 13836 / NRRL 3357 / JCM 12722 / SRRC 167).